The following is a 142-amino-acid chain: 5a,11a-dehydrotetracycline/5a,11a-dehydrooxytetracycline reductase (142 aa).

The protein belongs to the pyridoxamine 5'-phosphate oxidase family.

It catalyses the reaction tetracycline + oxidized coenzyme F420-(gamma-L-Glu)(n) + H(+) = 5a,11a-dehydrotetracycline + reduced coenzyme F420-(gamma-L-Glu)(n). It carries out the reaction oxytetracycline + oxidized coenzyme F420-(gamma-L-Glu)(n) + H(+) = 5a,11a-dehydrooxytetracycline + reduced coenzyme F420-(gamma-L-Glu)(n). It functions in the pathway antibiotic biosynthesis; oxytetracycline biosynthesis. Involved in the biosynthesis of the antibiotics tetracycline and oxytetracycline. Catalyzes the C(5) reduction of 5a,11a-dehydrooxytetracycline to yield oxytetracycline as a major product. Also catalyzes the C(12) reduction of 5a,11a-dehydrotetracycline (12-dehydrotetracycline) to produce tetracycline as a minor product. This Streptomyces rimosus subsp. rimosus (strain ATCC 10970 / DSM 40260 / JCM 4667 / NRRL 2234) protein is 5a,11a-dehydrotetracycline/5a,11a-dehydrooxytetracycline reductase.